A 301-amino-acid polypeptide reads, in one-letter code: Syntaxin-17 (301 aa).

The residue at position 2 (Ser-2) is an N-acetylserine. Residues 2 to 227 (SEDEEKVKLR…KNLQKAAKYK (226 aa)) are Cytoplasmic-facing. At Lys-41 the chain carries N6-acetyllysine. Positions 49-128 (DKLHEEHINA…QVNDEELLQP (80 aa)) form a coiled coil. A Phosphotyrosine; by ABL1 modification is found at Tyr-156. One can recognise a t-SNARE coiled-coil homology domain in the interval 161 to 223 (IPQDQNAAES…EEGTKNLQKA (63 aa)). The helical transmembrane segment at 228–248 (LAALPVAGALIGGVVGGPIGL) threads the bilayer. The tract at residues 228–274 (LAALPVAGALIGGVVGGPIGLLAGFKVAGIAAALGGGVLGFTGGKLI) is necessary and sufficient for localization to autophagosome. Residues 249-253 (LAGFK) lie on the Lumenal side of the membrane. The chain crosses the membrane as a helical span at residues 254–274 (VAGIAAALGGGVLGFTGGKLI). At 275-301 (QRRKQKMMEKLTSSCPDLPSQSDKKRS) the chain is on the cytoplasmic side. Ser-288 bears the Phosphoserine mark. Positions 298–301 (KKRS) match the Endoplasmic reticulum retention signal motif.

Belongs to the syntaxin family. In terms of assembly, forms a SNARE complex composed of VAMP8, SNAP29 and STX17 involved in fusion of autophagosome with lysosome. May interact with VTI1B. Probably interacts with BET1, SCFD1 and SEC22B. Interacts with PTPN2 and ABL1; involved in STX17 phosphorylation. Interacts with COPB1. Interacts with TMED9 and TMED10; the interaction is direct. Interacts with VAMP7. Interacts with RUBCNL/PACER; promoting targeting of RUBCNL/PACER to autophagosome. Interacts with VAMP8, SNAP29, VPS39 and VPS41; these interactions are increased in the absence of TMEM39A. Interacts with IRGM; promoting STX17 recruitment to autophagosomes. Interacts with ATG8 proteins GABARAP and MAP1LC3B. Interacts with RNF115; this interaction enhances STX17 stability which in turn promotes autophagosome maturation. Interacts with RAB39A (GTP-bound); the interaction promotes autophagosome-lysosome membrane fusion driven by STX17-SNAP29-VAMP8. Interacts with RAB39B; the interaction may promote a different fonction in autophagy as compared with RAB39A. In terms of processing, dephosphorylation by PTPN2; regulates exit from the endoplasmic reticulum. Phosphorylated at Tyr-156 probably by ABL1.

The protein resides in the endoplasmic reticulum membrane. The protein localises to the smooth endoplasmic reticulum membrane. Its subcellular location is the endoplasmic reticulum-Golgi intermediate compartment membrane. It is found in the cytoplasmic vesicle. It localises to the autophagosome membrane. The protein resides in the COPII-coated vesicle membrane. The protein localises to the cytoplasm. Its subcellular location is the cytosol. It is found in the mitochondrion membrane. It localises to the autolysosome membrane. Functionally, SNAREs, soluble N-ethylmaleimide-sensitive factor-attachment protein receptors, are essential proteins for fusion of cellular membranes. SNAREs localized on opposing membranes assemble to form a trans-SNARE complex, an extended, parallel four alpha-helical bundle that drives membrane fusion. STX17 is a SNARE of the autophagosome involved in autophagy through the direct control of autophagosome membrane fusion with the lysosome membrane. May also play a role in the early secretory pathway where it may maintain the architecture of the endoplasmic reticulum-Golgi intermediate compartment/ERGIC and Golgi and/or regulate transport between the endoplasmic reticulum, the ERGIC and the Golgi. This chain is Syntaxin-17, found in Mus musculus (Mouse).